The following is a 1052-amino-acid chain: MASRGGDGLVGGGRGPLGGRDGRGRGPAGGRGGGRGGGHPQQQQQQQPGYGRGDGGGRGPAPAAGGVVGRGTGGGGGGGRGDGGRGRGRGGGGGDGVRPAMAAAPAASTPGPVAVAARSTPPPTPAVQIPAVASSSSAQPAAAAQPPPAAAAVSALARDVGRQLAVVAGGGRPAPPAAPPAPIPVSSKGVAPPSRPGFGTVGERIVVRANHFLVRVSDNDMIYLYDVSLSPPPKTRRINRVVMSELARLHRESHLGGISFAYDGSKALYTAGKLPFDSMDFKIKLGKELREIEYKVTIRRAGQADLHHLHEFIAGRQRDSQQQTIQALDVVLRESPSLNYVIVSRSFYSTMFGRQDIGDGLECWKGYYQSLRPTQMGLSLNIDISSTPFFKPISVVEYVKNCLGTPTNANGPDPRRPLSDIDRLKVKKALRGVRVETTHQGKSSKYKITTITSEPLSQLNFSMDGTTQTVIQYFSQRYKYRLQYTSWPCLQSGNPSNPIYLPMEVCTIVEGQRYSKKLNDKQVTGLLRATCQPPQKREQKIIEMVQHNNYPADKVVSDFRINISNQMATMPARVLPAPTLRYHDSGKEKTCNPRVGQWNMINKKMVGGAVVQKWTCVNFSRMHIDAVHRLCGELVYTCNAIGMVFNEMPEIEVGSAAPNNIEAALSNIHTRAPQLQLLIVILPDVNGYYGRIKRVCETELGIVSQCLKPGRKLLSLDRQFLENVSLKINVKAGGRNSVLQRPLVPGGLENTTIIFGADVTHPASGEDSSASIAAVVASMDWPEITKYKALVSAQPPRQEIIQDLFTMTEVAQNADAPAQKAEGSKKNFICGGMFRELLMSFYSKNAKRKPQRIIFYRDGVSDGQFLHVLLYEMDAIKKAIASLDPAYRPLVTFVVVQKRHHTRLFPEVHGRQDLTDRSGNVRPGTVVDTNICHPSEFDFYLCSHAGIQGTSRPTHYHVLHDENRFSADQLQMLTYNLCYTYARCTRSVSVVPPAYYAHLAAFRARYYDEPPAMDGASSVGSGGNQAAAGGQPPAVRRLPQIKENVKDVMFYC.

The span at 1–39 shows a compositional bias: gly residues; sequence MASRGGDGLVGGGRGPLGGRDGRGRGPAGGRGGGRGGGH. Disordered regions lie at residues 1 to 127 and 170 to 194; these read MASR…TPAV and GGRP…APPS. Residues 40–49 are compositionally biased toward low complexity; that stretch reads PQQQQQQQPG. Gly residues-rich tracts occupy residues 50–59 and 66–81; these read YGRGDGGGRG and GVVG…GGRG. Over residues 97–117 the composition is skewed to low complexity; sequence VRPAMAAAPAASTPGPVAVAA. The span at 173 to 183 shows a compositional bias: pro residues; it reads PAPPAAPPAPI. Residues 394–510 form the PAZ domain; that stretch reads SVVEYVKNCL…LPMEVCTIVE (117 aa). Positions 677–1009 constitute a Piwi domain; that stretch reads LLIVILPDVN…AAFRARYYDE (333 aa).

Belongs to the argonaute family. Ago subfamily. In terms of tissue distribution, expressed in seeds.

Functionally, probably involved in the RNA silencing pathway. May bind to short RNAs such as microRNAs (miRNAs) or short interfering RNAs (siRNAs), and represses the translation of mRNAs which are complementary to them. This is Protein argonaute 14 (AGO14) from Oryza sativa subsp. japonica (Rice).